A 547-amino-acid polypeptide reads, in one-letter code: RING finger protein ETP1 homolog (547 aa).

The RING-type zinc finger occupies 208 to 248 (CVVCLERMDSSITGLITIVCQHTFHCPCLQKWGNSSCPVCR). A UBP-type; degenerate zinc finger spans residues 245-338 (PVCRYTQKVQ…GKLVELSTDG (94 aa)). Zn(2+)-binding residues include C262, C265, C274, C277, C282, H289, H293, and H299. Over residues 514-523 (LPNNSTVRSN) the composition is skewed to polar residues. The interval 514–547 (LPNNSTVRSNSVKSKKKKKKKPVVPSSSGSLGTD) is disordered. The span at 526 to 535 (KSKKKKKKKP) shows a compositional bias: basic residues.

The protein resides in the cytoplasm. May act as a cytoplasmic retention protein with a role in regulating nuclear transport. The chain is RING finger protein ETP1 homolog from Schizosaccharomyces pombe (strain 972 / ATCC 24843) (Fission yeast).